The following is a 206-amino-acid chain: 2,3-bisphosphoglycerate-dependent phosphoglycerate mutase (206 aa).

Residues 9-16, 22-23, Arg61, 88-91, Lys99, 115-116, and 159-160 contribute to the substrate site; these read RHGQSEWN, TG, ERDY, RR, and GN. Residue His10 is the Tele-phosphohistidine intermediate of the active site. The active-site Proton donor/acceptor is the Glu88.

Belongs to the phosphoglycerate mutase family. BPG-dependent PGAM subfamily. In terms of assembly, homodimer.

It catalyses the reaction (2R)-2-phosphoglycerate = (2R)-3-phosphoglycerate. It participates in carbohydrate degradation; glycolysis; pyruvate from D-glyceraldehyde 3-phosphate: step 3/5. Functionally, catalyzes the interconversion of 2-phosphoglycerate and 3-phosphoglycerate. This chain is 2,3-bisphosphoglycerate-dependent phosphoglycerate mutase, found in Chelativorans sp. (strain BNC1).